A 319-amino-acid chain; its full sequence is MQYKKEALLLMLFAVLLALTQRFSYSRTKDHLQKMYACWKDHLEEPHLSTWFDPKKRPDVIATTGWLAPVLWEGTYNREVLEQYYKRLNITIGLAVFATGNFSKEPLRRFIKSADKYFMVGYNVIFYILADSTYNLPYFELGPLRTLKTWRLFEEEMCQDCNLRNMNNMHSKIIQCIQYEVNFLFMMAVNQTFKNNFGVETLGKSVAQLHAWWYFKKPRDFPYERRTKSAAFIPFEKGDFYYHRAIVGGTPLNVLNLIEQYIKGITDDNTNKLVSTFESHLNKYFFINKPARVLSPEYNWDPRFKTPPEIKHIKIAWKP.

The Cytoplasmic portion of the chain corresponds to 1–6; sequence MQYKKE. Residues 7 to 26 traverse the membrane as a helical; Signal-anchor for type II membrane protein segment; it reads ALLLMLFAVLLALTQRFSYS. Residues 27–319 are Lumenal-facing; that stretch reads RTKDHLQKMY…IKHIKIAWKP (293 aa). 2 N-linked (GlcNAc...) asparagine glycosylation sites follow: Asn89 and Asn101. Substrate-binding positions include 97-102, 188-190, and 210-213; these read FATGNF, AVN, and HAWW. Catalysis depends on Glu278, which acts as the Nucleophile.

Belongs to the glycosyltransferase 6 family. Mn(2+) is required as a cofactor.

It localises to the golgi apparatus. It is found in the golgi stack membrane. The catalysed reaction is a beta-D-galactosyl-(1-&gt;4)-N-acetyl-beta-D-glucosaminyl derivative + UDP-alpha-D-galactose = an alpha-D-galactosyl-(1-&gt;3)-beta-D-galactosyl-(1-&gt;4)-N-acetyl-beta-D-glucosaminyl derivative + UDP + H(+). It participates in protein modification; protein glycosylation. Synthesizes the galactose-alpha(1,3)-galactose group by catalyzing the transfer of a galactose residue, with an alpha-1,3 linkage, on terminal lactosaminide (Gal-beta-1,4-GlcNAc-R) disaccharide borne by a glycoprotein or a glycolipid. The chain is N-acetyllactosaminide alpha-1,3-galactosyltransferase-like 1 (Ggta1l1) from Mus musculus (Mouse).